Reading from the N-terminus, the 453-residue chain is Phosphatidylserine decarboxylase proenzyme 1, mitochondrial (453 aa).

The N-terminal 29 residues, 1–29 (MKPRFPQNVYFLARYSYLRRFQHSQRRTF), are a transit peptide targeting the mitochondrion. Residues 30–74 (SSFLNNIRSNYSGARASPLGGSSGAGAGAGGGGTGDSKGNAFLVP) lie on the Mitochondrial matrix side of the membrane. Residues 75 to 93 (GATMATILMLGALHARRLY) form a helical membrane-spanning segment. The Mitochondrial intermembrane segment spans residues 94–453 (EDKKIEEKRE…GQALGRWKEE (360 aa)). Catalysis depends on charge relay system; for autoendoproteolytic cleavage activity residues Asp-199, His-296, and Ser-408. The Schiff-base intermediate with substrate; via pyruvic acid; for decarboxylase activity role is filled by Ser-408. Ser-408 carries the pyruvic acid (Ser); by autocatalysis modification.

This sequence belongs to the phosphatidylserine decarboxylase family. PSD-B subfamily. Eukaryotic type I sub-subfamily. In terms of assembly, heterodimer of a large membrane-associated beta subunit and a small pyruvoyl-containing alpha subunit. The cofactor is pyruvate. Is synthesized initially as an inactive proenzyme. Formation of the active enzyme involves a self-maturation process in which the active site pyruvoyl group is generated from an internal serine residue via an autocatalytic post-translational modification. Two non-identical subunits are generated from the proenzyme in this reaction, and the pyruvate is formed at the N-terminus of the alpha chain, which is derived from the carboxyl end of the proenzyme. The autoendoproteolytic cleavage occurs by a canonical serine protease mechanism, in which the side chain hydroxyl group of the serine supplies its oxygen atom to form the C-terminus of the beta chain, while the remainder of the serine residue undergoes an oxidative deamination to produce ammonia and the pyruvoyl prosthetic group on the alpha chain. During this reaction, the Ser that is part of the protease active site of the proenzyme becomes the pyruvoyl prosthetic group, which constitutes an essential element of the active site of the mature decarboxylase. As to expression, expressed in roots, leaves, stems and flowers.

It localises to the mitochondrion. It is found in the mitochondrion inner membrane. It catalyses the reaction a 1,2-diacyl-sn-glycero-3-phospho-L-serine + H(+) = a 1,2-diacyl-sn-glycero-3-phosphoethanolamine + CO2. It participates in phospholipid metabolism; phosphatidylethanolamine biosynthesis; phosphatidylethanolamine from CDP-diacylglycerol: step 2/2. Its function is as follows. Catalyzes the formation of phosphatidylethanolamine (PtdEtn) from phosphatidylserine (PtdSer). Plays a central role in phospholipid metabolism and in the interorganelle trafficking of phosphatidylserine. Contributes only to a minor proportion of PtdEtn production. The protein is Phosphatidylserine decarboxylase proenzyme 1, mitochondrial (PSD1) of Arabidopsis thaliana (Mouse-ear cress).